The sequence spans 161 residues: Ribonuclease H (161 aa).

The 145-residue stretch at 5–149 (EKLAIAAATD…VDAIAVAFSK (145 aa)) folds into the RNase H type-1 domain. Mg(2+)-binding residues include D14, E53, D78, and D141.

Belongs to the RNase H family. In terms of assembly, monomer. Mg(2+) is required as a cofactor.

It localises to the cytoplasm. The enzyme catalyses Endonucleolytic cleavage to 5'-phosphomonoester.. Endonuclease that specifically degrades the RNA of RNA-DNA hybrids. The sequence is that of Ribonuclease H from Prochlorococcus marinus (strain NATL2A).